Consider the following 1009-residue polypeptide: Mediator of RNA polymerase II transcription subunit 5 (1009 aa).

It belongs to the Mediator complex subunit 5 family. Component of the Mediator complex.

Its subcellular location is the nucleus. In terms of biological role, component of the Mediator complex, a coactivator involved in the regulated transcription of nearly all RNA polymerase II-dependent genes. Mediator functions as a bridge to convey information from gene-specific regulatory proteins to the basal RNA polymerase II transcription machinery. Mediator is recruited to promoters by direct interactions with regulatory proteins and serves as a scaffold for the assembly of a functional preinitiation complex with RNA polymerase II and the general transcription factors. The chain is Mediator of RNA polymerase II transcription subunit 5 (nut1) from Neosartorya fischeri (strain ATCC 1020 / DSM 3700 / CBS 544.65 / FGSC A1164 / JCM 1740 / NRRL 181 / WB 181) (Aspergillus fischerianus).